The chain runs to 120 residues: U13-lycotoxin-Ls1a (120 aa).

The signal sequence occupies residues methionine 1–cysteine 16. Positions phenylalanine 17–arginine 54 are excised as a propeptide. 4 disulfides stabilise this stretch: cysteine 56/cysteine 70, cysteine 63/cysteine 76, cysteine 69/cysteine 87, and cysteine 78/cysteine 85. Residues cysteine 56–cysteine 95 form the Agouti domain.

It belongs to the neurotoxin 05 (agouti) family. Post-translationally, contains 6 disulfide bonds. In terms of tissue distribution, expressed by the venom gland.

Its subcellular location is the secreted. The polypeptide is U13-lycotoxin-Ls1a (Lycosa singoriensis (Wolf spider)).